The sequence spans 164 residues: Replication restart protein DnaT (164 aa).

It belongs to the DnaT family. Homooligomerizes. Interacts with PriB. Component of the replication restart primosome. Primosome assembly occurs via a 'hand-off' mechanism. PriA binds to replication forks, subsequently PriB then DnaT bind; DnaT then displaces ssDNA to generate the helicase loading substrate.

Functionally, involved in the restart of stalled replication forks, which reloads the replicative helicase on sites other than the origin of replication. Can function in multiple replication restart pathways. Displaces ssDNA from a PriB-ssDNA complex. Probably forms a spiral filament on ssDNA. This is Replication restart protein DnaT from Buchnera aphidicola subsp. Acyrthosiphon pisum (strain 5A).